The following is a 377-amino-acid chain: MAPVSNETFLPTEAWGEATLRPSFVRDEDERPKVAHDRFSDAVPLISLHGIDGARRAQIRDRVAAACEDWGIFQVIDHGVDADLIADMTRLAREFFALPAEDKLRYDMSGGKKGGFIVSSHLQGEAVQDWREIVTYFSYPVKARDYGRWPEKPAGWCAVVERYSERLMGLSCNLMGVLSEAMGLETEALAKACVDMDQKVVVNFYPRCPQPDLTLGLKRHTDPGTITLLLQDLVGGLQATRDGGKNWITVQPISGAFVVNLGDHGHFMSNGRFKNADHQAVVNGESSRLSIATFQNPAPDARVWPLAVREGEEPILEEPITFTEMYRRKMERDLDLAKRKKQAKDQLMQQQLQLQQQQAVAAAPMPTATKPLNEILA.

The 105-residue stretch at 193–297 (CVDMDQKVVV…RLSIATFQNP (105 aa)) folds into the Fe2OG dioxygenase domain. Residues His220, Asp222, and His278 each contribute to the Fe cation site. Arg288 is a 2-oxoglutarate binding site.

This sequence belongs to the iron/ascorbate-dependent oxidoreductase family. Fe(2+) is required as a cofactor. It depends on L-ascorbate as a cofactor.

It catalyses the reaction a (2S)-flavan-4-one + 2-oxoglutarate + O2 = a (2R,3R)-dihydroflavonol + succinate + CO2. Its pathway is secondary metabolite biosynthesis; flavonoid biosynthesis. Its function is as follows. Catalyzes the 3-beta-hydroxylation of 2S-flavanones to 2R,3R-dihydroflavonols which are intermediates in the biosynthesis of flavonols, anthocyanidins, catechins and proanthocyanidins in plants. This is Naringenin,2-oxoglutarate 3-dioxygenase from Hordeum vulgare (Barley).